A 717-amino-acid chain; its full sequence is Amino-acid acetyltransferase, mitochondrial (717 aa).

A mitochondrion-targeting transit peptide spans 1–23 (MFIWTKAPARGLGKASKILPKRD). Residues 35 to 70 (KQFHTATTSVRRSSSSAKERQRAERQQLTRLLKESP) form a disordered region. A compositionally biased stretch (low complexity) spans 39-50 (TATTSVRRSSSS). Residues 51–70 (AKERQRAERQQLTRLLKESP) are compositionally biased toward basic and acidic residues. The region spanning 518–691 (NPSIELADDP…GDVDDAKKRD (174 aa)) is the N-acetyltransferase domain.

It belongs to the acetyltransferase family.

The protein localises to the mitochondrion. It carries out the reaction L-glutamate + acetyl-CoA = N-acetyl-L-glutamate + CoA + H(+). The protein operates within amino-acid biosynthesis; L-arginine biosynthesis; N(2)-acetyl-L-ornithine from L-glutamate: step 1/4. In terms of biological role, N-acetylglutamate synthase involved in arginine biosynthesis. The sequence is that of Amino-acid acetyltransferase, mitochondrial (arg2) from Pyrenophora tritici-repentis (strain Pt-1C-BFP) (Wheat tan spot fungus).